The sequence spans 115 residues: NADH-ubiquinone oxidoreductase chain 3 (115 aa).

A run of 3 helical transmembrane segments spans residues L3–W23, F55–L75, and L84–Y104.

It belongs to the complex I subunit 3 family. As to quaternary structure, core subunit of respiratory chain NADH dehydrogenase (Complex I) which is composed of 45 different subunits. Interacts with TMEM186. Interacts with TMEM242.

The protein localises to the mitochondrion inner membrane. The enzyme catalyses a ubiquinone + NADH + 5 H(+)(in) = a ubiquinol + NAD(+) + 4 H(+)(out). Its function is as follows. Core subunit of the mitochondrial membrane respiratory chain NADH dehydrogenase (Complex I) which catalyzes electron transfer from NADH through the respiratory chain, using ubiquinone as an electron acceptor. Essential for the catalytic activity of complex I. This Balaenoptera musculus (Blue whale) protein is NADH-ubiquinone oxidoreductase chain 3.